A 455-amino-acid polypeptide reads, in one-letter code: Glutamyl-tRNA reductase (455 aa).

Residues 49 to 52, Ser109, 114 to 116, and Gln120 each bind substrate; these read TCNR and ETQ. Residue Cys50 is the Nucleophile of the active site. 189-194 serves as a coordination point for NADP(+); the sequence is GAGKMG.

It belongs to the glutamyl-tRNA reductase family. Homodimer.

The catalysed reaction is (S)-4-amino-5-oxopentanoate + tRNA(Glu) + NADP(+) = L-glutamyl-tRNA(Glu) + NADPH + H(+). The protein operates within porphyrin-containing compound metabolism; protoporphyrin-IX biosynthesis; 5-aminolevulinate from L-glutamyl-tRNA(Glu): step 1/2. Its function is as follows. Catalyzes the NADPH-dependent reduction of glutamyl-tRNA(Glu) to glutamate 1-semialdehyde (GSA). In Bacillus pumilus (strain SAFR-032), this protein is Glutamyl-tRNA reductase.